A 345-amino-acid chain; its full sequence is Nuclear distribution protein nudE-like 1 (345 aa).

The stretch at 28–190 (QSFQEARDEL…LAVRERQQEV (163 aa)) forms a coiled coil. Positions 56–166 (VQAEQRNRDL…LDEKESLLVS (111 aa)) are self-association. The tract at residues 64–189 (DLQADNQRLK…ELAVRERQQE (126 aa)) is interaction with KATNB1. The interval 114-133 (YVRELEQANDDLERAKRATI) is required for interaction with PAFAH1B1. The tract at residues 175–345 (RDLRQELAVR…SAPGMLPLSV (171 aa)) is interaction with CENPF. The segment at 189-256 (EVTRKSAPSS…SARISALNIV (68 aa)) is interaction with YWHAE. Residues 191–345 (TRKSAPSSPT…SAPGMLPLSV (155 aa)) are interaction with NEFL. An interaction with KATNA1 region spans residues 195–256 (APSSPTLDCE…SARISALNIV (62 aa)). Position 215 is a phosphoserine (serine 215). A disordered region spans residues 217 to 240 (PATPVGKGTENSFPSPKAIPNGFG). Residue threonine 219 is modified to Phosphothreonine. A Phosphoserine modification is found at serine 231. Residues 241-280 (TSPLTPSARISALNIVGDLLRKVGALESKLAACRNFAKDQ) are interaction with DISC1. Serine 242 is modified (phosphoserine; by CDK1). A Phosphothreonine; by CDK1 and MAPK1 modification is found at threonine 245. The tract at residues 256 to 291 (VGDLLRKVGALESKLAACRNFAKDQASRKSYVPGSV) is required for localization to the centrosome and interaction with dynein, dynactin, tubulin gamma, PCM1 and PCNT. Cysteine 273 carries the S-palmitoyl cysteine; by ZDHHC2, ZDHHC3 and ZDHHC7 lipid modification. A disordered region spans residues 314–345 (KGAVNGFDPAPPPPGLGSSRPSSAPGMLPLSV). Over residues 329–339 (LGSSRPSSAPG) the composition is skewed to low complexity. Serine 344 is modified (phosphoserine).

The protein belongs to the nudE family. In terms of assembly, interacts with PLEKHM1 (via N- and C-terminus). Interacts with dynactin, PCM1 and PCNT. Interacts (via C-terminus) with CENPF. Self-associates. Interacts with DISC1, dynein, tubulin gamma, KATNA1, KATNB1, microtubules, PAFAHB1 and YWHAE. Interacts directly with NEFL and indirectly with NEFH. Interacts with ZNF365. Interacts with GTP-bound RAB9A; the interaction may lead to RAB9A-dynein motor tethering. Post-translationally, phosphorylated by CDK1 and MAPK1. Phosphorylated in mitosis. Phosphorylated by CDK5. Phosphorylation by CDK5 promotes interaction with KATNA1 and YWHAE. In terms of processing, palmitoylation at Cys-273 reduces affinity for dynein. As to expression, expressed in brain, liver, lung and testis (at protein level). Expressed in brain, epididymis, eye, heart, kidney, large intestine, liver, ovary, pancreas, prostate, skeletal muscle, smooth muscle, spleen, submaxillary gland, testis, thymus and thyroid. Within the brain expression is pronounced in the cortex, hippocampus, olfactory bulb, striatum, thalamic and hypothalamic structures and in the molecular layer of the cerebellum. Largely excluded from cortical progenitor cells which express NDE1.

It is found in the cytoplasm. The protein resides in the cytoskeleton. Its subcellular location is the microtubule organizing center. The protein localises to the centrosome. It localises to the chromosome. It is found in the centromere. The protein resides in the kinetochore. Its subcellular location is the spindle. Functionally, required for organization of the cellular microtubule array and microtubule anchoring at the centrosome. May regulate microtubule organization at least in part by targeting the microtubule severing protein KATNA1 to the centrosome. Also positively regulates the activity of the minus-end directed microtubule motor protein dynein. May enhance dynein-mediated microtubule sliding by targeting dynein to the microtubule plus ends. Required for several dynein- and microtubule-dependent processes such as the maintenance of Golgi integrity, the centripetal motion of secretory vesicles and the coupling of the nucleus and centrosome. Also required during brain development for the migration of newly formed neurons from the ventricular/subventricular zone toward the cortical plate. Plays a role, together with DISC1, in the regulation of neurite outgrowth. Required for mitosis in some cell types but appears to be dispensible for mitosis in cortical neuronal progenitors, which instead requires NDE1. Facilitates the polymerization of neurofilaments from the individual subunits NEFH and NEFL. Positively regulates lysosome peripheral distribution and ruffled border formation in osteoclasts. Plays a role, together with DISC1, in the regulation of neurite outgrowth. May act as a RAB9A/B effector that tethers RAB9-associated late endosomes to the dynein motor for their retrograde transport to the trans-Golgi network. This chain is Nuclear distribution protein nudE-like 1, found in Mus musculus (Mouse).